The following is a 302-amino-acid chain: Sulfotransferase 1C4 (302 aa).

55–60 serves as a coordination point for 3'-phosphoadenylyl sulfate; that stretch reads KAGTTW. A substrate-binding site is contributed by 113–115; it reads KTH. The active-site Proton acceptor is histidine 115. Residues arginine 137, serine 145, tyrosine 200, 234–239, and 262–266 contribute to the 3'-phosphoadenylyl sulfate site; these read TSFDVM and FMRKG.

The protein belongs to the sulfotransferase 1 family. As to expression, expressed in liver, kidney and jejunum.

The protein resides in the cytoplasm. The protein localises to the cytosol. It catalyses the reaction a phenol + 3'-phosphoadenylyl sulfate = an aryl sulfate + adenosine 3',5'-bisphosphate + H(+). It carries out the reaction 17beta-estradiol + 3'-phosphoadenylyl sulfate = 17beta-estradiol 3-sulfate + adenosine 3',5'-bisphosphate + H(+). The catalysed reaction is bisphenol A + 3'-phosphoadenylyl sulfate = bisphenyl A sulfate + adenosine 3',5'-bisphosphate + H(+). Functionally, sulfotransferase that utilizes 3'-phospho-5'-adenylyl sulfate (PAPS) as sulfonate donor to catalyze the sulfate conjugation of phenolic compounds and estrogen (E2). Can also sulfonate estrogenic compounds, however, the dietary flavonoids (phytoestrogen) and environmental estrogens, like bisphenol A are better substrates than 17beta-estradiol (E2). This Macaca fascicularis (Crab-eating macaque) protein is Sulfotransferase 1C4 (SULT1C4).